Reading from the N-terminus, the 219-residue chain is Ribose-5-phosphate isomerase A (219 aa).

Substrate contacts are provided by residues 29–32 (TGST), 82–85 (DGAD), and 95–98 (KGGG). Residue glutamate 104 is the Proton acceptor of the active site. Position 122 (lysine 122) interacts with substrate.

The protein belongs to the ribose 5-phosphate isomerase family. In terms of assembly, homodimer.

The catalysed reaction is aldehydo-D-ribose 5-phosphate = D-ribulose 5-phosphate. Its pathway is carbohydrate degradation; pentose phosphate pathway; D-ribose 5-phosphate from D-ribulose 5-phosphate (non-oxidative stage): step 1/1. Catalyzes the reversible conversion of ribose-5-phosphate to ribulose 5-phosphate. This Chromobacterium violaceum (strain ATCC 12472 / DSM 30191 / JCM 1249 / CCUG 213 / NBRC 12614 / NCIMB 9131 / NCTC 9757 / MK) protein is Ribose-5-phosphate isomerase A.